We begin with the raw amino-acid sequence, 506 residues long: Maturase K (506 aa).

It belongs to the intron maturase 2 family. MatK subfamily.

It localises to the plastid. The protein localises to the chloroplast. Its function is as follows. Usually encoded in the trnK tRNA gene intron. Probably assists in splicing its own and other chloroplast group II introns. This Rhododendron ferrugineum (Alpenrose) protein is Maturase K.